Here is a 919-residue protein sequence, read N- to C-terminus: Translation initiation factor IF-2 (919 aa).

Residues 93-107 (MGKALPEEVPEKIAP) show a composition bias toward basic and acidic residues. Disordered regions lie at residues 93-145 (MGKA…PAEP) and 158-279 (KIQP…RKGE). A compositionally biased stretch (pro residues) spans 136–145 (LAPPEKPAEP). Over residues 158–171 (KIQPPEKFAEEPLK) the composition is skewed to basic and acidic residues. The span at 172–193 (KPAVIEPEKAAAAPKAVPGEAK) shows a compositional bias: low complexity. Composition is skewed to basic and acidic residues over residues 194 to 203 (PLPRTERVQE) and 256 to 279 (GAPK…RKGE). In terms of domain architecture, tr-type G spans 420 to 589 (PRAPVVTIMG…LLQADVLELK (170 aa)). Positions 429–436 (GHVDHGKT) are G1. A GTP-binding site is contributed by 429–436 (GHVDHGKT). Residues 454–458 (GITQA) form a G2 region. Positions 475–478 (DTPG) are G3. GTP contacts are provided by residues 475-479 (DTPGH) and 529-532 (NKID). Residues 529–532 (NKID) are G4. The interval 565–567 (SAK) is G5.

Belongs to the TRAFAC class translation factor GTPase superfamily. Classic translation factor GTPase family. IF-2 subfamily.

It is found in the cytoplasm. One of the essential components for the initiation of protein synthesis. Protects formylmethionyl-tRNA from spontaneous hydrolysis and promotes its binding to the 30S ribosomal subunits. Also involved in the hydrolysis of GTP during the formation of the 70S ribosomal complex. This chain is Translation initiation factor IF-2, found in Syntrophus aciditrophicus (strain SB).